We begin with the raw amino-acid sequence, 1183 residues long: Peroxisomal ATPase PEX6 (1183 aa).

Residues 161-205 (ESRGKKTGEPEDGPLANGIDLNGVDDSDSDEDVLSQGDDDDENNV) are disordered. Acidic residues predominate over residues 183–204 (GVDDSDSDEDVLSQGDDDDENN). Positions 576–785 (LPNNYISPVH…VERAMTACSE (210 aa)) are AAA-cassette D1. Residues 878-1070 (GILFYGPPGT…CSDAMLKAIT (193 aa)) are AAA-cassette D2. An ATP-binding site is contributed by 883–890 (GPPGTGKT). Positions 1160–1183 (IMVDGPGTGGEGAFGDDGDEEGLY) are disordered. Acidic residues predominate over residues 1173 to 1183 (FGDDGDEEGLY).

Belongs to the AAA ATPase family. Interacts with PEX1; forming the PEX1-PEX6 AAA ATPase complex, which is composed of a heterohexamer formed by a trimer of PEX1-PEX6 dimers.

The protein resides in the cytoplasm. It is found in the cytosol. The protein localises to the peroxisome membrane. The catalysed reaction is ATP + H2O = ADP + phosphate + H(+). Its function is as follows. Component of the PEX1-PEX6 AAA ATPase complex, a protein dislocase complex that mediates the ATP-dependent extraction of the PEX5 receptor from peroxisomal membranes, an essential step for PEX5 recycling. Specifically recognizes PEX5 monoubiquitinated at 'Cys-6', and pulls it out of the peroxisome lumen through the PEX2-PEX10-PEX12 retrotranslocation channel. Extraction by the PEX1-PEX6 AAA ATPase complex is accompanied by unfolding of the TPR repeats and release of bound cargo from PEX5. Regulates autophagy and biogenesis of peroxisomes and Woronin bodies. Plays important roles in mycelial growth and development and stress response. Is also essential for conidiation and fatty acid utilization. Required for nematode predation via trap formation. The protein is Peroxisomal ATPase PEX6 of Arthrobotrys oligospora (strain ATCC 24927 / CBS 115.81 / DSM 1491) (Nematode-trapping fungus).